The sequence spans 346 residues: Methylthioribose-1-phosphate isomerase (346 aa).

Residues 46–48 (RGA), Arg-89, and Gln-196 contribute to the substrate site. Catalysis depends on Asp-237, which acts as the Proton donor. Residue 247–248 (NK) coordinates substrate.

The protein belongs to the eIF-2B alpha/beta/delta subunits family. MtnA subfamily.

It carries out the reaction 5-(methylsulfanyl)-alpha-D-ribose 1-phosphate = 5-(methylsulfanyl)-D-ribulose 1-phosphate. It functions in the pathway amino-acid biosynthesis; L-methionine biosynthesis via salvage pathway; L-methionine from S-methyl-5-thio-alpha-D-ribose 1-phosphate: step 1/6. Its function is as follows. Catalyzes the interconversion of methylthioribose-1-phosphate (MTR-1-P) into methylthioribulose-1-phosphate (MTRu-1-P). In Trichlorobacter lovleyi (strain ATCC BAA-1151 / DSM 17278 / SZ) (Geobacter lovleyi), this protein is Methylthioribose-1-phosphate isomerase.